Here is an 802-residue protein sequence, read N- to C-terminus: MTTRGSRSEKVKRIFQQFDGNLDGGLSREEMSALVVAVNPRVKFSDEQISAILDEVFRTYAEFIDGDKGLTFDGLLRTYDDGAGDVDRDFDALGIEFNEETKGASEASSSSITDERAVEAQKQQRTAAWAVSPNHGIVFDETWKLVDDLEILVKRLKSKQEKDGKLKVDNNNVDAFSEAGWSRELGPSSDISDKRIYWEESSHDYGVFVKELGVLRSKADGARSREEAFDGHMAIGKVLYEHQLFKEALVSFKRACELQPTDVRPHFKAGNCLYVLGKYKESKDEFLLALEAAESGGNQWAYLLPQIYVNLGISLEGEGMVLSACEYYREAAILCPTHYRALKLLGSALFGVGEYRAAVKALEEAIYLKPDYADAHCDLASSLHAMGEDERAIEVFQRAIDLKPGHVDALYNLGGLYMDLGRFQRASEMYTRVLAVWPNHWRAQLNKAVSLLGAGETEEAKRALKEALKMTNRVELHDAVSHLKQLQKKKKVKKGNSANEEGPFIVVESSKFKTVGEKTTLRPDLAIALQVRAFQRVTRLWKCDVEALRREMRDNNVPVSYSGNGIPTKSIRRPNLEEILRRLLNVLKPETFQGAIKAINEKILSVLDDSGSGRVDLGMFYAVIAPLCGGHPDKRKRVAFDALLWKPVNEGSSQITKMEAVKYIKLLRAIYIPSQGMSEMLEVHGESDDTSTVTFNQFLEMYDDSEWGFGIMSTVFKLETRDRNRHGNQVCSVCRYPIIGSRFKEVKTGFSLCNQCYSEGKIPPTFKQQEEYKFREYASEVEAMKAKCVCFSMQSHKKTIAT.

An EF-hand 1 domain is found at 6–41 (SRSEKVKRIFQQFDGNLDGGLSREEMSALVVAVNPR). TPR repeat units follow at residues 229 to 262 (FDGH…QPTD), 264 to 296 (RPHF…AESG), 305 to 338 (PQIY…CPTH), 339 to 372 (YRAL…KPDY), 373 to 406 (ADAH…KPGH), 407 to 440 (VDAL…WPNH), and 442 to 474 (RAQL…TNRV). The EF-hand 2 domain occupies 595 to 630 (AIKAINEKILSVLDDSGSGRVDLGMFYAVIAPLCGG).

This is an uncharacterized protein from Arabidopsis thaliana (Mouse-ear cress).